Here is a 222-residue protein sequence, read N- to C-terminus: N-(5'-phosphoribosyl)anthranilate isomerase (222 aa).

It belongs to the TrpF family.

It catalyses the reaction N-(5-phospho-beta-D-ribosyl)anthranilate = 1-(2-carboxyphenylamino)-1-deoxy-D-ribulose 5-phosphate. It functions in the pathway amino-acid biosynthesis; L-tryptophan biosynthesis; L-tryptophan from chorismate: step 3/5. In Xanthomonas oryzae pv. oryzae (strain PXO99A), this protein is N-(5'-phosphoribosyl)anthranilate isomerase.